The primary structure comprises 396 residues: 1-deoxy-D-xylulose 5-phosphate reductoisomerase (396 aa).

Residues Thr13, Gly14, Ser15, Ile16, and Asn127 each contribute to the NADPH site. Residue Lys128 coordinates 1-deoxy-D-xylulose 5-phosphate. Glu129 contacts NADPH. Asp153 contacts Mn(2+). 4 residues coordinate 1-deoxy-D-xylulose 5-phosphate: Ser154, Glu155, Ser184, and His207. Residue Glu155 participates in Mn(2+) binding. Position 213 (Gly213) interacts with NADPH. 1-deoxy-D-xylulose 5-phosphate contacts are provided by Ser220, Asn225, Lys226, and Glu229. Glu229 serves as a coordination point for Mn(2+).

It belongs to the DXR family. It depends on Mg(2+) as a cofactor. Requires Mn(2+) as cofactor.

It catalyses the reaction 2-C-methyl-D-erythritol 4-phosphate + NADP(+) = 1-deoxy-D-xylulose 5-phosphate + NADPH + H(+). Its pathway is isoprenoid biosynthesis; isopentenyl diphosphate biosynthesis via DXP pathway; isopentenyl diphosphate from 1-deoxy-D-xylulose 5-phosphate: step 1/6. Functionally, catalyzes the NADPH-dependent rearrangement and reduction of 1-deoxy-D-xylulose-5-phosphate (DXP) to 2-C-methyl-D-erythritol 4-phosphate (MEP). In Pseudomonas fluorescens (strain ATCC BAA-477 / NRRL B-23932 / Pf-5), this protein is 1-deoxy-D-xylulose 5-phosphate reductoisomerase.